Reading from the N-terminus, the 795-residue chain is Phenylalanine--tRNA ligase beta subunit (795 aa).

Residues 39 to 148 (AGSFHGVVVG…ADAPIGTDIR (110 aa)) enclose the tRNA-binding domain. The B5 domain maps to 401 to 476 (PKRATITLRR…RVYGYNNIPD (76 aa)). 4 residues coordinate Mg(2+): Asp454, Asp460, Glu463, and Glu464. One can recognise an FDX-ACB domain in the interval 701–794 (SRFPANRRDI…LKERFQASLR (94 aa)).

The protein belongs to the phenylalanyl-tRNA synthetase beta subunit family. Type 1 subfamily. Tetramer of two alpha and two beta subunits. The cofactor is Mg(2+).

It is found in the cytoplasm. It carries out the reaction tRNA(Phe) + L-phenylalanine + ATP = L-phenylalanyl-tRNA(Phe) + AMP + diphosphate + H(+). This chain is Phenylalanine--tRNA ligase beta subunit, found in Shigella flexneri.